The sequence spans 376 residues: Oligopeptide transport system permease protein OppC (376 aa).

The next 7 membrane-spanning stretches (helical) occupy residues 46–66 (WAIL…IVPL), 149–169 (YPLL…WASM), 173–193 (LWIA…YGAI), 209–229 (IIEI…GATF), 242–262 (VIFT…RIYI), 297–317 (LAVV…SLVF), and 341–361 (IALI…TRVF). The ABC transmembrane type-1 domain maps to 169–362 (MAKSLWIAIV…ILTVSTRVFA (194 aa)).

Belongs to the binding-protein-dependent transport system permease family. OppBC subfamily. In terms of assembly, the complex is composed of two ATP-binding proteins (OppD and OppF), two transmembrane proteins (OppB and OppC) and a solute-binding protein (OppA).

It localises to the cell membrane. Its function is as follows. Part of the ABC transporter complex OppABCDF involved in the uptake of oligopeptides. Probably responsible for the translocation of the substrate across the membrane. This chain is Oligopeptide transport system permease protein OppC (oppC), found in Mycoplasma pneumoniae (strain ATCC 29342 / M129 / Subtype 1) (Mycoplasmoides pneumoniae).